The sequence spans 228 residues: Ribonuclease 3 (228 aa).

The RNase III domain maps to 5 to 128 (LNRLMARLGY…IIGAMLLDGG (124 aa)). A Mg(2+)-binding site is contributed by glutamate 41. Residue aspartate 45 is part of the active site. Aspartate 114 and glutamate 117 together coordinate Mg(2+). Glutamate 117 is an active-site residue. A DRBM domain is found at 155–225 (DAKTRLQEWL…ASLALEWLEQ (71 aa)).

Belongs to the ribonuclease III family. In terms of assembly, homodimer. Requires Mg(2+) as cofactor.

The protein localises to the cytoplasm. It catalyses the reaction Endonucleolytic cleavage to 5'-phosphomonoester.. In terms of biological role, digests double-stranded RNA. Involved in the processing of primary rRNA transcript to yield the immediate precursors to the large and small rRNAs (23S and 16S). Processes some mRNAs, and tRNAs when they are encoded in the rRNA operon. Processes pre-crRNA and tracrRNA of type II CRISPR loci if present in the organism. The polypeptide is Ribonuclease 3 (Alcanivorax borkumensis (strain ATCC 700651 / DSM 11573 / NCIMB 13689 / SK2)).